The sequence spans 543 residues: Chaperonin GroEL (543 aa).

ATP is bound by residues 29–32 (TLGP), 86–90 (DGTTT), Gly-413, 476–478 (NAA), and Asp-492.

Belongs to the chaperonin (HSP60) family. Forms a cylinder of 14 subunits composed of two heptameric rings stacked back-to-back. Interacts with the co-chaperonin GroES.

It localises to the cytoplasm. It catalyses the reaction ATP + H2O + a folded polypeptide = ADP + phosphate + an unfolded polypeptide.. Together with its co-chaperonin GroES, plays an essential role in assisting protein folding. The GroEL-GroES system forms a nano-cage that allows encapsulation of the non-native substrate proteins and provides a physical environment optimized to promote and accelerate protein folding. The chain is Chaperonin GroEL from Streptococcus pyogenes serotype M3 (strain SSI-1).